We begin with the raw amino-acid sequence, 502 residues long: Protein IWS1 homolog 1 (502 aa).

Positions 1–12 (MGFEDDPYRDVD) are enriched in basic and acidic residues. 2 disordered regions span residues 1–61 (MGFE…DNDK) and 87–208 (DEDV…DEDE). Acidic residues-rich tracts occupy residues 13 to 22 (GEPIVDFDDF), 34 to 49 (QDFD…DWDG), and 87 to 97 (DEDVDDAEFDE). 2 stretches are compositionally biased toward basic and acidic residues: residues 138 to 151 (NRGE…DEMW) and 181 to 194 (PSER…DRSP). Tyr185 is modified (phosphotyrosine). The 84-residue stretch at 287-370 (TLLKNWLEPL…DKWSRPIFNK (84 aa)) folds into the TFIIS N-terminal domain. Residues 385 to 434 (VPYRRPPVKKPSNKATMESRDGDFDLEIRERKTGLTSGQSSRGDRQMTMR) form a disordered region. The segment covering 401–417 (MESRDGDFDLEIRERKT) has biased composition (basic and acidic residues).

It belongs to the IWS1 family. Interacts with BZR2/BES1 and SPT6 (via N-terminus). Interacts with ASHH2/SDG8.

Its subcellular location is the nucleus. Functionally, transcription factor involved in RNA polymerase II (RNAPII) transcription regulation. Involved in transcription elongation. May function at post-recruitment and elongation steps of transcription. May be recruited by BZR2/BES1 to target genes and promote their expression during transcription elongation process. Required for brassinosteroid (BR)-induced gene expression. Required the for regulation of numerous nitrogen-responsive genes in roots. Acts in roots to repress NRT2.1 transcription in response to high nitrogen supply. This repression is associated with an IWS1-dependent increase of trimethylation on 'Lys-27' H3K27me3 at the NRT2.1 locus. This chain is Protein IWS1 homolog 1, found in Arabidopsis thaliana (Mouse-ear cress).